The chain runs to 193 residues: N-(5'-phosphoribosyl)anthranilate isomerase (193 aa).

The protein belongs to the TrpF family.

It carries out the reaction N-(5-phospho-beta-D-ribosyl)anthranilate = 1-(2-carboxyphenylamino)-1-deoxy-D-ribulose 5-phosphate. It participates in amino-acid biosynthesis; L-tryptophan biosynthesis; L-tryptophan from chorismate: step 3/5. The chain is N-(5'-phosphoribosyl)anthranilate isomerase from Streptococcus mutans serotype c (strain ATCC 700610 / UA159).